A 426-amino-acid polypeptide reads, in one-letter code: Limonoid 21-O-acetyltransferse (426 aa).

Catalysis depends on proton acceptor residues His-152 and Asp-365.

It belongs to the plant acyltransferase family. Monomer. As to expression, expressed in maturing fruits and in juice vesicles.

The enzyme catalyses isomeliandiol + acetyl-CoA = 21-O-acetyl-isomeliandiol + CoA. The protein operates within secondary metabolite biosynthesis; terpenoid biosynthesis. Functionally, acetyltransferase involved in the biosynthesis of limonoids triterpene natural products such as limonin, a compound with insecticidal activity responsible for the bitter taste in citrus. Catalyzes the formation of 21-O-acetyl-isomeliandiol from isomeliandiol. The protein is Limonoid 21-O-acetyltransferse of Citrus sinensis (Sweet orange).